A 270-amino-acid polypeptide reads, in one-letter code: B3 domain-containing protein Os03g0212300 (270 aa).

DNA-binding regions (TF-B3) lie at residues 13–110 and 158–265; these read FEFF…FDET and VTLR…RKAD.

The protein resides in the nucleus. This chain is B3 domain-containing protein Os03g0212300, found in Oryza sativa subsp. japonica (Rice).